The primary structure comprises 177 residues: MLGSRFLLLALGLLVLVLAEESAEQQVQEPTELEKSGEQLSEEDLIDEQKRTPMQRSSMVRFGRSPMQRSSMVRFGKRSPMQRSSMVRFGKRSPMQRSSMVRFGKRSPMERSAMVRFGRSPMDRSKMVRFGRSSIDRASMVRLGKRTPMQRSSMVRFGKRSMEFEMQSNEKNIEDSE.

An N-terminal signal peptide occupies residues 1 to 19 (MLGSRFLLLALGLLVLVLA). The propeptide occupies 20-49 (EESAEQQVQEPTELEKSGEQLSEEDLIDEQ). Residues 25–106 (QQVQEPTELE…RSSMVRFGKR (82 aa)) are disordered. A phenylalanine amide mark is found at Phe-62, Phe-75, Phe-89, Phe-103, Phe-117, and Phe-130. The residue at position 143 (Leu-143) is a Leucine amide. A Phenylalanine amide modification is found at Phe-157. The propeptide occupies 161 to 177 (SMEFEMQSNEKNIEDSE).

The protein belongs to the FARP (FMRFamide related peptide) family. As to expression, expressed in the ASI sensory neurons, the ALA interneuron and the AVG interneuron from where secretion occurs. Expression in the ASI neurons is necessary and sufficient to maintain serotonin-induced fat loss.

It localises to the secreted. In terms of biological role, FMRFamide-like neuropeptides. Stimulates serotonin-induced fat loss by binding to and activating the npr-22 receptor which leads to induction of the atgl-1 lipase and subsequent fat loss. Together with atfs-1, negatively regulates the expression of the transcription regulator hlh-11, to promote expression of atgl-1, and thus atgl-1-dependent fat oxidation in response to mitochondrial stress. Its function is as follows. TPMQRSSMVRF-amide: Acts as a ligand for the npr-22 receptor in vitro. Functionally, SPMQRSSMVRF-amide: Acts as a ligand for the npr-22 receptor in vitro. Acts as a ligand for the npr-22 receptor in vitro. This chain is FMRFamide-like neuropeptides 7, found in Caenorhabditis elegans.